Here is a 182-residue protein sequence, read N- to C-terminus: MIKLTQEEQKYLFDSIRIIPDFPKKGIIFRDITTLLNNKEALNFLLKHLKERYKDYNLDFIAGTESRGFIFASMICAKLNLPFVPIRKPGKLPFETFSCEYDLEYGSDKVELHKDAFKNIQNARVLLVDDLIATGGTAIASYELIQKAGAKCVEACFLMNLKDLNGANKLEKLTSVYSVLEI.

Belongs to the purine/pyrimidine phosphoribosyltransferase family. In terms of assembly, homodimer.

Its subcellular location is the cytoplasm. The enzyme catalyses AMP + diphosphate = 5-phospho-alpha-D-ribose 1-diphosphate + adenine. It participates in purine metabolism; AMP biosynthesis via salvage pathway; AMP from adenine: step 1/1. Functionally, catalyzes a salvage reaction resulting in the formation of AMP, that is energically less costly than de novo synthesis. The chain is Adenine phosphoribosyltransferase from Campylobacter jejuni subsp. jejuni serotype O:23/36 (strain 81-176).